Consider the following 81-residue polypeptide: Insect-toxin Cn10 (81 aa).

Positions 1 to 13 (ITACLVLIGTVCA) are cleaved as a signal peptide. One can recognise an LCN-type CS-alpha/beta domain in the interval 14–79 (KEGYLVNKST…TYPIPGKTCR (66 aa)). Disulfide bonds link Cys-25-Cys-78, Cys-29-Cys-54, Cys-38-Cys-59, and Cys-42-Cys-61. Position 81 (Lys-81) is a propeptide, removed by a carboxypeptidase.

This sequence belongs to the long (4 C-C) scorpion toxin superfamily. Sodium channel inhibitor family. Beta subfamily. Expressed by the venom gland.

The protein resides in the secreted. Its function is as follows. Beta toxins bind voltage-independently at site-4 of sodium channels (Nav) and shift the voltage of activation toward more negative potentials thereby affecting sodium channel activation and promoting spontaneous and repetitive firing. Is toxic on insects and crustaceans, but not on mammals. This is Insect-toxin Cn10 from Centruroides noxius (Mexican scorpion).